Consider the following 402-residue polypeptide: Calcium-responsive transactivator (402 aa).

The segment at 1-148 (MSVAFASARP…TLPTTSMSMS (148 aa)) is N-terminal auto-inhibitory domain; necessary for interaction with SMARCA4/BRG1. The SH2-binding motif lies at 50-53 (YQQI). Disordered stretches follow at residues 72–129 (QSLL…GPNH), 141–170 (PTTS…SVPL), 195–250 (MHQQ…SSQQ), 262–290 (QYGH…YQPA), and 305–402 (TQHY…NYQQ). Residues 92–106 (QSGSAQGLHSQGSLS) are compositionally biased toward low complexity. Over residues 117-129 (SLMQAQIGNGPNH) the composition is skewed to polar residues. The interval 149–237 (GSGHGSGPGY…GGGVMGQRPM (89 aa)) is methionine-rich intra-molecular domain. Residues 196 to 224 (HQQAASSHYSAAQGGSQHYQGQSMAMMGQ) are compositionally biased toward low complexity. An MFD domain region spans residues 251-323 (YLGQEEYYGG…SQYSQQQTGY (73 aa)). Low complexity-rich tracts occupy residues 311–379 (GGNS…RASQ) and 390–402 (YGYE…NYQQ). The necessary for nuclear localization stretch occupies residues 340–402 (NQQSYPGQQQ…EQGQYGNYQQ (63 aa)). The SH2-binding motif lies at 359–362 (SQYS). Positions 377–385 (ASQTGPSTQ) match the SH3-binding motif. Residues 393–402 (EQGQYGNYQQ) form a necessary for interaction with CREBBP and for the recruitment of CREBBP to the nuclear bodies region. Residues 397–400 (YGNY) carry the SH2-binding motif.

Belongs to the SS18 family. Homodimer. Dimerization may be necessary for its function in neuronal dendritic development. Interacts (via C-terminus) with CREBBP (via N-terminus), EP300 and SMARCA4/BRG1. Interacts with the nBAF complex. Association with CREBBP facilitates transcription while the association with SMARCA4/BRG1 suppresses CREST-mediated transcription in resting neurons.

It is found in the nucleus. The protein resides in the chromosome. The protein localises to the centromere. It localises to the kinetochore. In terms of biological role, transcriptional activator which is required for calcium-dependent dendritic growth and branching in cortical neurons. Recruits CREB-binding protein (CREBBP) to nuclear bodies. Component of the CREST-BRG1 complex, a multiprotein complex that regulates promoter activation by orchestrating a calcium-dependent release of a repressor complex and a recruitment of an activator complex. In resting neurons, transcription of the c-FOS promoter is inhibited by BRG1-dependent recruitment of a phospho-RB1-HDAC1 repressor complex. Upon calcium influx, RB1 is dephosphorylated by calcineurin, which leads to release of the repressor complex. At the same time, there is increased recruitment of CREBBP to the promoter by a CREST-dependent mechanism, which leads to transcriptional activation. The CREST-BRG1 complex also binds to the NR2B promoter, and activity-dependent induction of NR2B expression involves a release of HDAC1 and recruitment of CREBBP. The sequence is that of Calcium-responsive transactivator (SS18L1) from Bos taurus (Bovine).